Here is a 407-residue protein sequence, read N- to C-terminus: Arylacetamide deacetylase-like 3 (407 aa).

The Involved in the stabilization of the negatively charged intermediate by the formation of the oxyanion hole signature appears at 119–121 (HGG). Residues Ser-193, Asp-347, and His-377 contribute to the active site.

Belongs to the 'GDXG' lipolytic enzyme family.

This Homo sapiens (Human) protein is Arylacetamide deacetylase-like 3 (AADACL3).